Reading from the N-terminus, the 408-residue chain is Peptidase T (408 aa).

His-78 contacts Zn(2+). The active site involves Asp-80. Asp-140 provides a ligand contact to Zn(2+). Glu-174 (proton acceptor) is an active-site residue. Positions 175, 197, and 379 each coordinate Zn(2+).

Belongs to the peptidase M20B family. It depends on Zn(2+) as a cofactor.

The protein resides in the cytoplasm. The enzyme catalyses Release of the N-terminal residue from a tripeptide.. In terms of biological role, cleaves the N-terminal amino acid of tripeptides. This Staphylococcus aureus (strain bovine RF122 / ET3-1) protein is Peptidase T.